Reading from the N-terminus, the 868-residue chain is DNA mismatch repair protein MutS (868 aa).

An ATP-binding site is contributed by 620–627 (GPNMGGKS).

The protein belongs to the DNA mismatch repair MutS family.

This protein is involved in the repair of mismatches in DNA. It is possible that it carries out the mismatch recognition step. This protein has a weak ATPase activity. This Xylella fastidiosa (strain Temecula1 / ATCC 700964) protein is DNA mismatch repair protein MutS.